Here is a 361-residue protein sequence, read N- to C-terminus: AT-hook motif nuclear-localized protein 12 (361 aa).

Disordered stretches follow at residues 29–143 (SQVA…GRKQ) and 286–361 (NNKT…LTRG). Polar residues predominate over residues 48–59 (SNPNIHHPQANN). Residues 85-95 (QPPPPPPPPEE) are compositionally biased toward pro residues. Positions 99–107 (KRKRGRPRK) match the Bipartite nuclear localization signal motif. DNA-binding regions (a.T hook) lie at residues 99 to 111 (KRKR…YGEP) and 130 to 142 (KRAR…TGRK). The PPC domain maps to 154–297 (TSAGLAFAPH…KTIRQEKEPN (144 aa)). Residues 306-322 (ETTPGSAAEPAASAGQQ) show a composition bias toward low complexity.

Homodimer. Interacts with AHL27, AHL29 and ATAF2/NAC081.

The protein localises to the nucleus. Transcription factor that specifically binds AT-rich DNA sequences related to the nuclear matrix attachment regions (MARs). The polypeptide is AT-hook motif nuclear-localized protein 12 (Arabidopsis thaliana (Mouse-ear cress)).